The primary structure comprises 439 residues: tRNA(Ile)-lysidine synthase (439 aa).

Position 25–30 (25–30 (SGGLDS)) interacts with ATP.

Belongs to the tRNA(Ile)-lysidine synthase family.

It is found in the cytoplasm. The catalysed reaction is cytidine(34) in tRNA(Ile2) + L-lysine + ATP = lysidine(34) in tRNA(Ile2) + AMP + diphosphate + H(+). Ligates lysine onto the cytidine present at position 34 of the AUA codon-specific tRNA(Ile) that contains the anticodon CAU, in an ATP-dependent manner. Cytidine is converted to lysidine, thus changing the amino acid specificity of the tRNA from methionine to isoleucine. This Edwardsiella ictaluri (strain 93-146) protein is tRNA(Ile)-lysidine synthase.